A 239-amino-acid polypeptide reads, in one-letter code: Fatty acid metabolism regulator protein (239 aa).

Positions 6 to 74 constitute an HTH gntR-type domain; the sequence is QSPAGFAEEY…HGKPTKVNNF (69 aa). A DNA-binding region (H-T-H motif) is located at residues 34–53; it reads ERELSELIGVTRTTLREVLQ.

In terms of assembly, homodimer.

Its subcellular location is the cytoplasm. Multifunctional regulator of fatty acid metabolism. The polypeptide is Fatty acid metabolism regulator protein (Escherichia fergusonii (strain ATCC 35469 / DSM 13698 / CCUG 18766 / IAM 14443 / JCM 21226 / LMG 7866 / NBRC 102419 / NCTC 12128 / CDC 0568-73)).